The sequence spans 501 residues: Monocarboxylate transporter 1 (501 aa).

At 1–22 (MPPAVGGPVGYTPPDGGWGWAV) the chain is on the cytoplasmic side. Residues 23–44 (VIGAFISIGFSYAFPKSITVFF) form a helical membrane-spanning segment. Position 38 (lysine 38) interacts with (S)-lactate. The Extracellular portion of the chain corresponds to 45 to 55 (KEIEGIFNATT). A helical transmembrane segment spans residues 56–80 (SEVSWISSIMLAVMYGGGPISSVLV). At 81–84 (NKYG) the chain is on the cytoplasmic side. A helical transmembrane segment spans residues 85–105 (SRPVMIVGGILSGSGLIAASF). Over 106-109 (CNTV) the chain is Extracellular. The chain crosses the membrane as a helical span at residues 110–132 (QELYFSVGVIGGLGLAFNLNPAL). The Cytoplasmic portion of the chain corresponds to 133–146 (TMIGKYFYKRRPLA). A helical transmembrane segment spans residues 147-169 (NGLAMAGSPVFLSTLAPLNQAFF). Over 170 to 174 (MIYGW) the chain is Extracellular. A helical transmembrane segment spans residues 175–194 (RGSFLILGGLLLNCCVAGAL). Residues 195 to 261 (MRPIGPKPTT…FLDLSLFKHR (67 aa)) lie on the Cytoplasmic side of the membrane. A disordered region spans residues 201–236 (KPTTAEKEKSKGSLQEAGKYETKKGASDANTDLIGG). Residues serine 210, serine 213, and serine 227 each carry the phosphoserine modification. Threonine 231 carries the phosphothreonine modification. A helical transmembrane segment spans residues 262 to 288 (GFLLYLSGNVLMFFGLFTPLVFLSNYG). The Extracellular segment spans residues 289–295 (KSKHYSS). A helical transmembrane segment spans residues 296–317 (EKAAFLLSILAFVDMVARPSMG). H(+) is bound at residue aspartate 309. A (S)-lactate-binding site is contributed by arginine 313. The Cytoplasmic portion of the chain corresponds to 318–328 (LVANTKWVRPR). Residues 329-349 (VQYFFAASIIANGLCHLAAPL) form a helical membrane-spanning segment. Over 350–353 (SSTY) the chain is Extracellular. The helical transmembrane segment at 354-375 (IELCIYAGFFGFAFGWLSSVLF) threads the bilayer. At 376 to 389 (ETLMDLVGPQRFSS) the chain is on the cytoplasmic side. Residues 390–410 (AVGLVTIVECCPVLLGPPVLG) form a helical membrane-spanning segment. Residues 411-421 (RLNDIYGDYKY) are Extracellular-facing. Residues 422-443 (TYWACGIILIVAGIYLFIGMGI) traverse the membrane as a helical segment. Topologically, residues 444–501 (NYRLLEKEQKAEKQQKKESKDEETNVDVAEKPKEVIDAAESPEHKATEEDPKEAESPV) are cytoplasmic. The interval 454 to 501 (AEKQQKKESKDEETNVDVAEKPKEVIDAAESPEHKATEEDPKEAESPV) is disordered. The residue at position 462 (serine 462) is a Phosphoserine. A Phosphothreonine modification is found at threonine 467. A phosphoserine mark is found at serine 484 and serine 499.

This sequence belongs to the major facilitator superfamily. Monocarboxylate porter (TC 2.A.1.13) family. Interacts with BSG; interaction mediates SLC16A1 targeting to the plasma membrane. Interacts with EMB; interaction mediates SLC16A1 targeting to the plasma membrane.

It localises to the cell membrane. It is found in the basolateral cell membrane. The protein resides in the apical cell membrane. The enzyme catalyses (S)-lactate(in) + H(+)(in) = (S)-lactate(out) + H(+)(out). The catalysed reaction is acetate(out) + H(+)(out) = acetate(in) + H(+)(in). It carries out the reaction acetoacetate(out) + H(+)(out) = acetoacetate(in) + H(+)(in). It catalyses the reaction pyruvate(out) + H(+)(out) = pyruvate(in) + H(+)(in). The enzyme catalyses (R)-3-hydroxybutanoate(out) + H(+)(out) = (R)-3-hydroxybutanoate(in) + H(+)(in). The catalysed reaction is 3-methyl-2-oxobutanoate(out) + H(+)(out) = 3-methyl-2-oxobutanoate(in) + H(+)(in). It carries out the reaction 4-methyl-2-oxopentanoate(out) + H(+)(out) = 4-methyl-2-oxopentanoate(in) + H(+)(in). It catalyses the reaction succinate(in) + 2 H(+)(in) = succinate(out) + 2 H(+)(out). Functionally, bidirectional proton-coupled monocarboxylate transporter. Catalyzes the rapid transport across the plasma membrane of many monocarboxylates such as lactate, pyruvate, acetate and the ketone bodies acetoacetate and beta-hydroxybutyrate, and thus contributes to the maintenance of intracellular pH. The transport direction is determined by the proton motive force and the concentration gradient of the substrate monocarboxylate. MCT1 is a major lactate exporter. Plays a role in cellular responses to a high-fat diet by modulating the cellular levels of lactate and pyruvate that contribute to the regulation of central metabolic pathways and insulin secretion, with concomitant effects on plasma insulin levels and blood glucose homeostasis. Facilitates the protonated monocarboxylate form of succinate export, that its transient protonation upon muscle cell acidification in exercising muscle and ischemic heart. Functions via alternate outward- and inward-open conformation states. Protonation and deprotonation of 309-Asp is essential for the conformational transition. In Bos taurus (Bovine), this protein is Monocarboxylate transporter 1 (SLC16A1).